We begin with the raw amino-acid sequence, 690 residues long: Probable xyloglucan glycosyltransferase 1 (690 aa).

2 helical membrane-spanning segments follow: residues Ala120–Trp140 and Leu166–Ile186. Residue Asp272 is part of the active site. The substrate site is built by Asp331 and Asp333. Asp425 is an active-site residue. The next 2 membrane-spanning stretches (helical) occupy residues Leu503–Val523 and Leu528–Ala548. Residues Gln607–His637 are disordered. 2 consecutive transmembrane segments (helical) span residues Ile640–Leu659 and Ile665–Ile685.

It belongs to the glycosyltransferase 2 family. Plant cellulose synthase-like C subfamily.

It localises to the golgi apparatus membrane. Probable beta-1,4-glucan synthase rather involved in the synthesis of the xyloglucan backbone than cellulose. Seems to work simultaneously with xyloglucan 6-xylosyltransferase. Xyloglucan is a noncellulosic polysaccharides of plant cell wall and consists of a glucan backbone substituted by xylose, galactose and fucose. The polypeptide is Probable xyloglucan glycosyltransferase 1 (CSLC1) (Oryza sativa subsp. japonica (Rice)).